The chain runs to 233 residues: Adenosine 5'-phosphosulfate reductase (233 aa).

Positions 120, 121, 203, and 206 each coordinate [4Fe-4S] cluster. The Nucleophile; cysteine thiosulfonate intermediate role is filled by Cys-229.

It belongs to the PAPS reductase family. CysH subfamily. It depends on [4Fe-4S] cluster as a cofactor.

It localises to the cytoplasm. It carries out the reaction [thioredoxin]-disulfide + sulfite + AMP + 2 H(+) = adenosine 5'-phosphosulfate + [thioredoxin]-dithiol. It participates in sulfur metabolism; hydrogen sulfide biosynthesis; sulfite from sulfate. In terms of biological role, catalyzes the formation of sulfite from adenosine 5'-phosphosulfate (APS) using thioredoxin as an electron donor. This is Adenosine 5'-phosphosulfate reductase from Bacillus pumilus (strain SAFR-032).